The chain runs to 181 residues: Inner membrane-spanning protein YciB (181 aa).

5 helical membrane passes run 10–30, 50–70, 80–100, 120–140, and 148–168; these read LIIFFALYKFYDIYVATGALI, MQLITFVMVALFGGMTLALHD, IVYVVFALGLTISQIMGKPAI, WAWVMFFSGCAALNLYVAYHL, and FKVFGLLAATLVFTLLTGGYI.

Belongs to the YciB family.

The protein localises to the cell inner membrane. Plays a role in cell envelope biogenesis, maintenance of cell envelope integrity and membrane homeostasis. This chain is Inner membrane-spanning protein YciB, found in Vibrio cholerae serotype O1 (strain ATCC 39315 / El Tor Inaba N16961).